Reading from the N-terminus, the 270-residue chain is Tetraspanin-17 (270 aa).

At 1-19 the chain is on the cytoplasmic side; it reads MPGKHQHFQEPEVGCCGKY. The chain crosses the membrane as a helical span at residues 20–40; that stretch reads FLFGFNIVFWVLGALFLAIGL. The Extracellular portion of the chain corresponds to 41-63; sequence WAWGEKGVLSNISALTDLGGLDP. The N-linked (GlcNAc...) asparagine glycan is linked to Asn51. Residues 64-84 form a helical membrane-spanning segment; that stretch reads VWLFVVVGGVMSVLGFAGCIG. Over 85 to 94 the chain is Cytoplasmic; that stretch reads ALRENTFLLK. Residues 95–115 traverse the membrane as a helical segment; the sequence is FFSVFLGLIFFLELATGILAF. At 116-234 the chain is on the extracellular side; the sequence is VFKDWIRDQL…GQFEKWLQDN (119 aa). 4 cysteine pairs are disulfide-bonded: Cys155/Cys223, Cys156/Cys188, Cys172/Cys182, and Cys189/Cys202. Asn171 is a glycosylation site (N-linked (GlcNAc...) asparagine). Residues 235-255 form a helical membrane-spanning segment; the sequence is LIVVAGVFMGIALLQIFGICL. Residues 256-270 are Cytoplasmic-facing; the sequence is AQNLVSDIKAVKANW.

This sequence belongs to the tetraspanin (TM4SF) family. Interacts with ADAM10; the interaction influences ADAM10 substrate specificity, endocytosis and turnover.

The protein resides in the cell membrane. Part of TspanC8 subgroup, composed of 6 members that interact with the transmembrane metalloprotease ADAM10. This interaction is required for ADAM10 exit from the endoplasmic reticulum and for enzymatic maturation and trafficking to the cell surface as well as substrate specificity. Different TspanC8/ADAM10 complexes have distinct substrates. Seems to regulate VE-cadherin expression in endothelial cells probably through interaction with ADAM10, promoting leukocyte transmigration. The protein is Tetraspanin-17 of Homo sapiens (Human).